A 223-amino-acid polypeptide reads, in one-letter code: MIF4G domain-containing protein A (223 aa).

Residues Q7 to G206 enclose the MIF4G domain.

The protein belongs to the MIF4GD family. In terms of assembly, interacts with eif4g1, eif4g2 and slbp; probably tethered by SLBP to the 3'-end of mRNAs ending with the histone stem-loop, it also interacts with eif4g1 which is bound to their 5'-end.

It is found in the cytoplasm. The protein localises to the nucleus. Functionally, functions in replication-dependent translation of histone mRNAs which differ from other eukaryotic mRNAs in that they do not end with a poly-A tail but a stem-loop. May participate in circularizing those mRNAs specifically enhancing their translation. The protein is MIF4G domain-containing protein A (mif4gd-a) of Xenopus laevis (African clawed frog).